We begin with the raw amino-acid sequence, 877 residues long: DNA mismatch repair protein MutS (877 aa).

An ATP-binding site is contributed by 627 to 634 (GPNMAGKS).

The protein belongs to the DNA mismatch repair MutS family.

Functionally, this protein is involved in the repair of mismatches in DNA. It is possible that it carries out the mismatch recognition step. This protein has a weak ATPase activity. The polypeptide is DNA mismatch repair protein MutS (Dinoroseobacter shibae (strain DSM 16493 / NCIMB 14021 / DFL 12)).